A 327-amino-acid polypeptide reads, in one-letter code: Flotillin-like protein FloA (327 aa).

A helical transmembrane segment spans residues 7–27; it reads FLVPILIVILLLVFFSLVPVG.

This sequence belongs to the flotillin-like FloA family. Homooligomerizes.

The protein resides in the cell membrane. It is found in the membrane raft. In terms of biological role, found in functional membrane microdomains (FMM) that may be equivalent to eukaryotic membrane rafts. FMMs are highly dynamic and increase in number as cells age. Flotillins are thought to be important factors in membrane fluidity. This is Flotillin-like protein FloA from Finegoldia magna (strain ATCC 29328 / DSM 20472 / WAL 2508) (Peptostreptococcus magnus).